Here is a 397-residue protein sequence, read N- to C-terminus: MPDSQSPNGSLFSRGMMAVIVAQFLSAFGDNALLFATLALLKQQFYPEWSQPVLQMVFVCAYILLAPFVGQVADSFSKGRVMMVANGLKLLGAVVIVFGGNPFVGYTLVGVGAAAYSPAKYGILGEITTGDRLVKANGLMESSTIAAILIGSMAGGMLADWHVGAALGVCALAYAGAVGANLLIPKLGAARPGQSWRFGPMTRSFFTACRTLWHNDETRFSLVGTSMFWGAGVTLRFLLVLWVPVALGITDNATPTYLNAMVAVGIVAGAGAAAKLVTLERVSRCMPAGILIGIAVIFFSLQQAALPAYLLLLLIGFFGGFFVVPLNALLQERGKRSVGAGNAIAVQNLGENTAMLLMLGLYSLAVKLSLPVVGIGVGFGAIFALAIAGLWLWRRKQ.

Helical transmembrane passes span 16–36 (MMAV…LLFA), 53–73 (VLQM…GQVA), 91–111 (LGAV…LVGV), 139–159 (LMES…GMLA), 164–184 (GAAL…NLLI), 229–249 (WGAG…ALGI), 257–277 (YLNA…AKLV), 282–302 (VSRC…FSLQ), 304–324 (AALP…FFVV), 344–364 (IAVQ…LYSL), and 372–392 (VVGI…GLWL).

Belongs to the major facilitator superfamily. LplT (TC 2.A.1.42) family.

Its subcellular location is the cell inner membrane. Catalyzes the facilitated diffusion of 2-acyl-glycero-3-phosphoethanolamine (2-acyl-GPE) into the cell. This Cronobacter sakazakii (strain ATCC BAA-894) (Enterobacter sakazakii) protein is Lysophospholipid transporter LplT.